The chain runs to 419 residues: Gamma-glutamyl phosphate reductase (419 aa).

The protein belongs to the gamma-glutamyl phosphate reductase family.

Its subcellular location is the cytoplasm. The enzyme catalyses L-glutamate 5-semialdehyde + phosphate + NADP(+) = L-glutamyl 5-phosphate + NADPH + H(+). It participates in amino-acid biosynthesis; L-proline biosynthesis; L-glutamate 5-semialdehyde from L-glutamate: step 2/2. Catalyzes the NADPH-dependent reduction of L-glutamate 5-phosphate into L-glutamate 5-semialdehyde and phosphate. The product spontaneously undergoes cyclization to form 1-pyrroline-5-carboxylate. This Bordetella bronchiseptica (strain ATCC BAA-588 / NCTC 13252 / RB50) (Alcaligenes bronchisepticus) protein is Gamma-glutamyl phosphate reductase.